We begin with the raw amino-acid sequence, 837 residues long: WW domain-containing protein tag-325 (837 aa).

The span at 1–11 (MTTAVQPSDTT) shows a compositional bias: polar residues. The disordered stretch occupies residues 1-66 (MTTAVQPSDT…SNGQNYADDP (66 aa)). Over residues 33-43 (SESAESSSSSS) the composition is skewed to low complexity. Residues 44–61 (QTNVSAANTLPRESNGQN) are compositionally biased toward polar residues. One can recognise a WW domain in the interval 96 to 129 (RDLLNGWFEYETDVGRTFFFNKETGKSQWIPPRF). Residues 150–161 (TCSFQGSSTSSS) show a composition bias toward low complexity. Disordered stretches follow at residues 150–181 (TCSF…RKSQ), 194–257 (DDVD…STAS), 338–403 (TTSS…EPAE), 548–574 (MRRR…EPRP), and 778–800 (KNKK…TPVQ). The span at 162 to 181 (EEQKENKMRESLADDDRKSQ) shows a compositional bias: basic and acidic residues. The segment covering 247–257 (PTSSRKASTAS) has biased composition (polar residues). The segment covering 371–403 (RCEERRGSGDGREPVRTIRCGDLERSENDEPAE) has biased composition (basic and acidic residues). Positions 386–505 (RTIRCGDLER…WYKSLEEVVA (120 aa)) constitute a PH domain. Positions 556–569 (SQSAIETVSTSVST) are enriched in polar residues. In terms of domain architecture, Rho-GAP spans 610-827 (STLSAICQHE…YLLESANKFD (218 aa)). Residues 778-788 (KNKKAGKKAKP) are compositionally biased toward basic residues.

The sequence is that of WW domain-containing protein tag-325 (tag-325) from Caenorhabditis elegans.